We begin with the raw amino-acid sequence, 298 residues long: Probable endonuclease 4 (298 aa).

Zn(2+)-binding residues include His-69, His-111, Glu-146, Asp-180, His-183, His-215, Asp-228, His-230, and Glu-260.

Belongs to the AP endonuclease 2 family. The cofactor is Zn(2+).

The catalysed reaction is Endonucleolytic cleavage to 5'-phosphooligonucleotide end-products.. Endonuclease IV plays a role in DNA repair. It cleaves phosphodiester bonds at apurinic or apyrimidinic (AP) sites, generating a 3'-hydroxyl group and a 5'-terminal sugar phosphate. The sequence is that of Probable endonuclease 4 from Bacillus cereus (strain 03BB102).